The sequence spans 302 residues: Methionyl-tRNA formyltransferase (302 aa).

107–110 contacts (6S)-5,6,7,8-tetrahydrofolate; it reads SDLP.

Belongs to the Fmt family.

It carries out the reaction L-methionyl-tRNA(fMet) + (6R)-10-formyltetrahydrofolate = N-formyl-L-methionyl-tRNA(fMet) + (6S)-5,6,7,8-tetrahydrofolate + H(+). Functionally, attaches a formyl group to the free amino group of methionyl-tRNA(fMet). The formyl group appears to play a dual role in the initiator identity of N-formylmethionyl-tRNA by promoting its recognition by IF2 and preventing the misappropriation of this tRNA by the elongation apparatus. This chain is Methionyl-tRNA formyltransferase, found in Rickettsia massiliae (strain Mtu5).